Reading from the N-terminus, the 479-residue chain is Calcium/calmodulin-dependent protein kinase type II delta chain (479 aa).

Positions tyrosine 14–isoleucine 272 constitute a Protein kinase domain. Residues leucine 20–valine 28 and lysine 43 contribute to the ATP site. Aspartate 136 serves as the catalytic Proton acceptor. At threonine 287 the chain carries Phosphothreonine. Phosphoserine is present on residues serine 315 and serine 319. A Phosphothreonine modification is found at threonine 337.

It belongs to the protein kinase superfamily. CAMK Ser/Thr protein kinase family. CaMK subfamily. CAMK2 is composed of four different chains: alpha, beta, gamma, and delta. The different isoforms assemble into homo- or heteromultimeric holoenzymes composed of 8 to 12 subunits.

It catalyses the reaction L-seryl-[protein] + ATP = O-phospho-L-seryl-[protein] + ADP + H(+). The catalysed reaction is L-threonyl-[protein] + ATP = O-phospho-L-threonyl-[protein] + ADP + H(+). With respect to regulation, autophosphorylation of CAMK2 plays an important role in the regulation of the kinase activity. In terms of biological role, caM-kinase II (CAMK2) is a prominent kinase in the central nervous system. In Gallus gallus (Chicken), this protein is Calcium/calmodulin-dependent protein kinase type II delta chain (CAMK2D).